Consider the following 440-residue polypeptide: T-box transcription factor TBX20 (440 aa).

The T-box DNA-binding region spans L103 to D282. Positions I308–T333 are disordered. The segment covering S321–T333 has biased composition (polar residues).

The protein resides in the nucleus. Acts as a transcriptional regulator involved in heart developmental processes. This chain is T-box transcription factor TBX20 (TBX20), found in Gallus gallus (Chicken).